The chain runs to 131 residues: MSWQAYVDEHLMCEIDGHHLSAAAIIGHDGSVWAQSSTFPQFKPEEIAAIIKDFDEPGSLAPTGLHLGGIKYMVIQGESGAVIRGKKGAGGITVKKTSQALIFGIYDEPLTPGQCNMIVERLGDYLLKQGL.

A disulfide bond links Cys-13 and Cys-115. An Involved in PIP2 interaction motif is present at residues 81–97 (AVIRGKKGAGGITVKKT). Residue Thr-111 is modified to Phosphothreonine.

Belongs to the profilin family. As to quaternary structure, occurs in many kinds of cells as a complex with monomeric actin in a 1:1 ratio. In terms of processing, phosphorylated by MAP kinases.

The protein localises to the cytoplasm. The protein resides in the cytoskeleton. In terms of biological role, binds to actin and affects the structure of the cytoskeleton. At high concentrations, profilin prevents the polymerization of actin, whereas it enhances it at low concentrations. The chain is Profilin-5 from Corylus avellana (European hazel).